The chain runs to 312 residues: Ribosomal RNA small subunit methyltransferase H (312 aa).

S-adenosyl-L-methionine is bound by residues 37-39, Asp57, Phe83, and Asp104; that span reads GGH.

It belongs to the methyltransferase superfamily. RsmH family.

The protein localises to the cytoplasm. The catalysed reaction is cytidine(1402) in 16S rRNA + S-adenosyl-L-methionine = N(4)-methylcytidine(1402) in 16S rRNA + S-adenosyl-L-homocysteine + H(+). Specifically methylates the N4 position of cytidine in position 1402 (C1402) of 16S rRNA. The protein is Ribosomal RNA small subunit methyltransferase H of Malacoplasma penetrans (strain HF-2) (Mycoplasma penetrans).